The primary structure comprises 133 residues: Cytochrome c-type biogenesis protein CcmE (133 aa).

Topologically, residues 1–7 (MKRKHKR) are cytoplasmic. A helical; Signal-anchor for type II membrane protein transmembrane segment spans residues 8-28 (LLFIIVTFIIFGSSVVIVLNK). The Periplasmic segment spans residues 29-133 (LRSNISFFFT…NYKPGKYRAK (105 aa)). Positions 121 and 125 each coordinate heme.

The protein belongs to the CcmE/CycJ family.

It is found in the cell inner membrane. Heme chaperone required for the biogenesis of c-type cytochromes. Transiently binds heme delivered by CcmC and transfers the heme to apo-cytochromes in a process facilitated by CcmF and CcmH. The chain is Cytochrome c-type biogenesis protein CcmE from Ehrlichia canis (strain Jake).